Consider the following 110-residue polypeptide: Protein P2 (110 aa).

Polar residues predominate over residues K72 to A82. Residues K72–A110 form a disordered region. Residues P99–A110 show a composition bias toward basic residues.

This is Protein P2 from Oryza sativa (Rice).